The sequence spans 442 residues: Putative mannan endo-1,6-alpha-mannosidase C1198.07c (442 aa).

Positions 1-19 are cleaved as a signal peptide; it reads MRYLSFFFEFFFLFSFAFA. Residues 20–421 are Lumenal-facing; sequence FDFDVTSDDS…TPATKSDKGW (402 aa). Asparagine 75, asparagine 124, asparagine 193, asparagine 229, asparagine 254, asparagine 257, and asparagine 356 each carry an N-linked (GlcNAc...) asparagine glycan. Residues 422–442 traverse the membrane as a helical segment; that stretch reads AGFLTFAFSFVFLLFSIWLYF.

This sequence belongs to the glycosyl hydrolase 76 family.

It is found in the endoplasmic reticulum membrane. The catalysed reaction is Random hydrolysis of (1-&gt;6)-alpha-D-mannosidic linkages in unbranched (1-&gt;6)-mannans.. The sequence is that of Putative mannan endo-1,6-alpha-mannosidase C1198.07c from Schizosaccharomyces pombe (strain 972 / ATCC 24843) (Fission yeast).